A 450-amino-acid polypeptide reads, in one-letter code: Tubulin alpha chain (450 aa).

Residue Gln-11 coordinates GTP. Lys-40 is subject to N6-acetyllysine. GTP contacts are provided by Glu-71, Gly-144, Thr-145, Thr-179, Asn-206, and Asn-228. Glu-71 contributes to the Mg(2+) binding site. Glu-254 is a catalytic residue.

The protein belongs to the tubulin family. As to quaternary structure, dimer of alpha and beta chains. A typical microtubule is a hollow water-filled tube with an outer diameter of 25 nm and an inner diameter of 15 nM. Alpha-beta heterodimers associate head-to-tail to form protofilaments running lengthwise along the microtubule wall with the beta-tubulin subunit facing the microtubule plus end conferring a structural polarity. Microtubules usually have 13 protofilaments but different protofilament numbers can be found in some organisms and specialized cells. Mg(2+) is required as a cofactor. Undergoes a tyrosination/detyrosination cycle, the cyclic removal and re-addition of a C-terminal tyrosine residue by the enzymes tubulin tyrosine carboxypeptidase (TTCP) and tubulin tyrosine ligase (TTL), respectively. Post-translationally, acetylation of alpha chains at Lys-40 stabilizes microtubules and affects affinity and processivity of microtubule motors. This modification has a role in multiple cellular functions, ranging from cell motility, cell cycle progression or cell differentiation to intracellular trafficking and signaling.

Its subcellular location is the cytoplasm. The protein localises to the cytoskeleton. It catalyses the reaction GTP + H2O = GDP + phosphate + H(+). Its function is as follows. Tubulin is the major constituent of microtubules, a cylinder consisting of laterally associated linear protofilaments composed of alpha- and beta-tubulin heterodimers. Microtubules grow by the addition of GTP-tubulin dimers to the microtubule end, where a stabilizing cap forms. Below the cap, tubulin dimers are in GDP-bound state, owing to GTPase activity of alpha-tubulin. In Prunus dulcis (Almond), this protein is Tubulin alpha chain (TUBA).